Here is a 363-residue protein sequence, read N- to C-terminus: tRNA(Met) cytidine acetate ligase (363 aa).

Residues 7-20, G96, N152, and R175 contribute to the ATP site; that span reads IAEFNPFHNGHKYL.

This sequence belongs to the TmcAL family.

It is found in the cytoplasm. It catalyses the reaction cytidine(34) in elongator tRNA(Met) + acetate + ATP = N(4)-acetylcytidine(34) in elongator tRNA(Met) + AMP + diphosphate. In terms of biological role, catalyzes the formation of N(4)-acetylcytidine (ac(4)C) at the wobble position of elongator tRNA(Met), using acetate and ATP as substrates. First activates an acetate ion to form acetyladenylate (Ac-AMP) and then transfers the acetyl group to tRNA to form ac(4)C34. The chain is tRNA(Met) cytidine acetate ligase from Streptococcus gordonii (strain Challis / ATCC 35105 / BCRC 15272 / CH1 / DL1 / V288).